Here is a 643-residue protein sequence, read N- to C-terminus: Phosphomethylpyrimidine synthase (643 aa).

Residues Asn248, Met277, Tyr306, His342, 362–364, 403–406, and Glu442 each bind substrate; these read SRG and DGLR. Residue His446 coordinates Zn(2+). Tyr469 lines the substrate pocket. Residue His510 participates in Zn(2+) binding. Positions 590, 593, and 598 each coordinate [4Fe-4S] cluster.

Belongs to the ThiC family. As to quaternary structure, homodimer. [4Fe-4S] cluster serves as cofactor.

The catalysed reaction is 5-amino-1-(5-phospho-beta-D-ribosyl)imidazole + S-adenosyl-L-methionine = 4-amino-2-methyl-5-(phosphooxymethyl)pyrimidine + CO + 5'-deoxyadenosine + formate + L-methionine + 3 H(+). It participates in cofactor biosynthesis; thiamine diphosphate biosynthesis. Catalyzes the synthesis of the hydroxymethylpyrimidine phosphate (HMP-P) moiety of thiamine from aminoimidazole ribotide (AIR) in a radical S-adenosyl-L-methionine (SAM)-dependent reaction. This Burkholderia mallei (strain NCTC 10247) protein is Phosphomethylpyrimidine synthase.